Consider the following 145-residue polypeptide: Protein SprT-like (145 aa).

A SprT-like domain is found at 4-140; it reads TNYVQEVSLA…VCGNCHGKLI (137 aa). Residue H64 participates in Zn(2+) binding. The active site involves E65. Position 68 (H68) interacts with Zn(2+).

It belongs to the SprT family. It depends on Zn(2+) as a cofactor.

The protein localises to the cytoplasm. The sequence is that of Protein SprT-like from Streptococcus pyogenes serotype M6 (strain ATCC BAA-946 / MGAS10394).